A 189-amino-acid chain; its full sequence is Small ribosomal subunit protein uS5 (189 aa).

The S5 DRBM domain occupies 27 to 90 (FEERLLEAAR…EDAKKKTIRV (64 aa)).

This sequence belongs to the universal ribosomal protein uS5 family. Part of the 30S ribosomal subunit. Contacts proteins S4 and S8.

Functionally, with S4 and S12 plays an important role in translational accuracy. Its function is as follows. Located at the back of the 30S subunit body where it stabilizes the conformation of the head with respect to the body. The polypeptide is Small ribosomal subunit protein uS5 (Hydrogenobaculum sp. (strain Y04AAS1)).